Reading from the N-terminus, the 245-residue chain is Octanoyltransferase (245 aa).

The region spanning 54-242 (QNAPEQVWLL…AFEQIFGPTI (189 aa)) is the BPL/LPL catalytic domain. Residues 93–100 (RGGEFTYH), 173–175 (AIG), and 186–188 (GVS) contribute to the substrate site. C204 (acyl-thioester intermediate) is an active-site residue.

It belongs to the LipB family.

It localises to the cytoplasm. The catalysed reaction is octanoyl-[ACP] + L-lysyl-[protein] = N(6)-octanoyl-L-lysyl-[protein] + holo-[ACP] + H(+). It participates in protein modification; protein lipoylation via endogenous pathway; protein N(6)-(lipoyl)lysine from octanoyl-[acyl-carrier-protein]: step 1/2. Functionally, catalyzes the transfer of endogenously produced octanoic acid from octanoyl-acyl-carrier-protein onto the lipoyl domains of lipoate-dependent enzymes. Lipoyl-ACP can also act as a substrate although octanoyl-ACP is likely to be the physiological substrate. This chain is Octanoyltransferase, found in Bartonella quintana (strain Toulouse) (Rochalimaea quintana).